The chain runs to 252 residues: Large ribosomal subunit protein uL4 (252 aa).

It belongs to the universal ribosomal protein uL4 family. In terms of assembly, part of the 50S ribosomal subunit.

In terms of biological role, one of the primary rRNA binding proteins, this protein initially binds near the 5'-end of the 23S rRNA. It is important during the early stages of 50S assembly. It makes multiple contacts with different domains of the 23S rRNA in the assembled 50S subunit and ribosome. Its function is as follows. Forms part of the polypeptide exit tunnel. The sequence is that of Large ribosomal subunit protein uL4 from Archaeoglobus fulgidus (strain ATCC 49558 / DSM 4304 / JCM 9628 / NBRC 100126 / VC-16).